A 167-amino-acid chain; its full sequence is Insertion element IS1 2 protein InsB (167 aa).

This sequence belongs to the transposase 27 family.

Absolutely required for transposition of IS1. In Escherichia coli (strain K12), this protein is Insertion element IS1 2 protein InsB (insB2).